A 317-amino-acid chain; its full sequence is Melanocyte-stimulating hormone receptor (317 aa).

Residues Met-1 to Glu-37 lie on the Extracellular side of the membrane. N-linked (GlcNAc...) asparagine glycosylation is present at Asn-29. The chain crosses the membrane as a helical span at residues Val-38–Ile-63. At Ala-64 to Pro-72 the chain is on the cytoplasmic side. Residues Met-73–Leu-93 form a helical membrane-spanning segment. Topologically, residues Glu-94–Asn-118 are extracellular. The helical transmembrane segment at Val-119–Val-140 threads the bilayer. The Cytoplasmic segment spans residues Asp-141 to Arg-163. A helical transmembrane segment spans residues Ala-164–Tyr-183. At Asp-184 to Cys-191 the chain is on the extracellular side. Residues Leu-192–Leu-211 traverse the membrane as a helical segment. The Cytoplasmic segment spans residues Ala-212–Ala-240. A helical transmembrane segment spans residues Ala-241–Leu-266. Residues Cys-267–Asn-279 lie on the Extracellular side of the membrane. Residues Phe-280–Phe-300 form a helical membrane-spanning segment. Residues Arg-301–Trp-317 lie on the Cytoplasmic side of the membrane. Cys-315 carries the S-palmitoyl cysteine lipid modification.

The protein belongs to the G-protein coupled receptor 1 family. In terms of assembly, interacts with MGRN1, but does not undergo MGRN1-mediated ubiquitination; this interaction competes with GNAS-binding and thus inhibits agonist-induced cAMP production. Interacts with OPN3; the interaction results in a decrease in MC1R-mediated cAMP signaling and ultimately a decrease in melanin production in melanocytes.

Its subcellular location is the cell membrane. In terms of biological role, receptor for MSH (alpha, beta and gamma) and ACTH. The activity of this receptor is mediated by G proteins which activate adenylate cyclase. Mediates melanogenesis, the production of eumelanin (black/brown) and phaeomelanin (red/yellow), via regulation of cAMP signaling in melanocytes. This Chlorocebus aethiops (Green monkey) protein is Melanocyte-stimulating hormone receptor (MC1R).